The chain runs to 100 residues: MIMKYFCTVMIAIALVGCTATPPPTQKAQQSKVSPTRTLDMEALCKAQAAQRYNTGAQKIAVTGFEQFQGSYEMRGNTFRKESFVCSFDADGQFLHLSMR.

The first 17 residues, methionine 1 to glycine 17, serve as a signal peptide directing secretion. Cysteine 18 is lipidated: N-palmitoyl cysteine. Cysteine 18 is lipidated: S-diacylglycerol cysteine.

It localises to the cell membrane. This is an uncharacterized protein from Salmonella typhi.